The primary structure comprises 1164 residues: DNA-directed RNA polymerase subunit beta' (1164 aa).

Residues Cys-60, Cys-62, Cys-75, and Cys-78 each contribute to the Zn(2+) site. Positions 449, 451, and 453 each coordinate Mg(2+). Cys-776, Cys-850, Cys-857, and Cys-860 together coordinate Zn(2+).

The protein belongs to the RNA polymerase beta' chain family. As to quaternary structure, the RNAP catalytic core consists of 2 alpha, 1 beta, 1 beta' and 1 omega subunit. When a sigma factor is associated with the core the holoenzyme is formed, which can initiate transcription. The cofactor is Mg(2+). It depends on Zn(2+) as a cofactor.

The catalysed reaction is RNA(n) + a ribonucleoside 5'-triphosphate = RNA(n+1) + diphosphate. Its function is as follows. DNA-dependent RNA polymerase catalyzes the transcription of DNA into RNA using the four ribonucleoside triphosphates as substrates. This Moorella thermoacetica (strain ATCC 39073 / JCM 9320) protein is DNA-directed RNA polymerase subunit beta'.